A 430-amino-acid chain; its full sequence is UDP-glucose 6-dehydrogenase AglM (430 aa).

Residue C269 is part of the active site.

Belongs to the UDP-glucose/GDP-mannose dehydrogenase family.

It carries out the reaction UDP-alpha-D-glucose + 2 NAD(+) + H2O = UDP-alpha-D-glucuronate + 2 NADH + 3 H(+). The protein operates within nucleotide-sugar biosynthesis; UDP-alpha-D-glucuronate biosynthesis; UDP-alpha-D-glucuronate from UDP-alpha-D-glucose: step 1/1. Its pathway is cell surface structure biogenesis; S-layer biogenesis. Activity improves as salinity decreases. Its function is as follows. Involved in the assembly of a N-linked pentasaccharide that decorates the S-layer glycoprotein and flagellins. Involved in the biosynthesis of the hexuronic acids found at both positions 2 and 3 of the pentasaccharide. This is UDP-glucose 6-dehydrogenase AglM (aglM) from Haloferax volcanii (strain ATCC 29605 / DSM 3757 / JCM 8879 / NBRC 14742 / NCIMB 2012 / VKM B-1768 / DS2) (Halobacterium volcanii).